A 206-amino-acid polypeptide reads, in one-letter code: Transcription antitermination protein NusB (206 aa).

The disordered stretch occupies residues 135-206 (ARGEKTSAQE…ETQPPGVNEV (72 aa)). Positions 169-180 (ATPATTPVTTTV) are enriched in low complexity.

The protein belongs to the NusB family.

Functionally, involved in transcription antitermination. Required for transcription of ribosomal RNA (rRNA) genes. Binds specifically to the boxA antiterminator sequence of the ribosomal RNA (rrn) operons. The protein is Transcription antitermination protein NusB of Heliobacterium modesticaldum (strain ATCC 51547 / Ice1).